The primary structure comprises 214 residues: RING-H2 finger protein ATL67 (214 aa).

Residues 33 to 53 (LGFGYSIAIALGFLVLLSTVL) form a helical membrane-spanning segment. The RING-type; atypical zinc-finger motif lies at 138–180 (CSICLCEYKEAEMLRMMPECKHYFHLCCLDAWLKLNGSCPVCR).

This sequence belongs to the RING-type zinc finger family. ATL subfamily.

The protein localises to the membrane. The enzyme catalyses S-ubiquitinyl-[E2 ubiquitin-conjugating enzyme]-L-cysteine + [acceptor protein]-L-lysine = [E2 ubiquitin-conjugating enzyme]-L-cysteine + N(6)-ubiquitinyl-[acceptor protein]-L-lysine.. It functions in the pathway protein modification; protein ubiquitination. This is RING-H2 finger protein ATL67 (ATL67) from Arabidopsis thaliana (Mouse-ear cress).